Here is a 760-residue protein sequence, read N- to C-terminus: E4 SUMO-protein ligase PIAL2 (760 aa).

Residues 143-301 form an interacting domain (IND), required for interaction with MOM1 and PIAL1 region; it reads IKSPGSTFSQ…GVIEASPDSD (159 aa). The SP-RING-type zinc-finger motif lies at 298 to 379; it reads PDSDIIEGPS…MAKILKDVEH (82 aa). Cysteine 329, histidine 331, cysteine 352, and cysteine 355 together coordinate Zn(2+). Residues 440–450 are compositionally biased toward basic and acidic residues; that stretch reads GDNKVEDRKPC. 4 disordered regions span residues 440–471, 492–522, 631–657, and 699–760; these read GDNK…SNDD, LGNT…MSID, GVRG…SVSR, and SQQS…GPTS. Polar residues-rich tracts occupy residues 492 to 518, 631 to 653, and 699 to 729; these read LGNT…SQIP, GVRG…PTVQ, and SQQS…SPFT.

The protein belongs to the PIAL protein ligase family. In terms of assembly, homodimer. Interacts with MOM1 and PIAL1 to form a high molecular mass complex which mediates transcriptional silencing at heterochromatin regions. Expressed in leaves, stems and flowers, and, at low levels, in siliques and old leaves.

It localises to the nucleus. It participates in protein modification; protein sumoylation. In terms of biological role, together with MOM1 and PIAL1, regulates transcriptional gene silencing (TGS) independently of changes in DNA methylation. E4-type SUMO ligase that promotes SUMO chain formation in a SCE1-dependent manner and thus contributes to a pathway for proteolytic removal of sumoylation substrates. Involved in stress responses and sulfur metabolism. This Arabidopsis thaliana (Mouse-ear cress) protein is E4 SUMO-protein ligase PIAL2.